The sequence spans 79 residues: Short neurotoxin 3 (79 aa).

The signal sequence occupies residues 1–23; it reads MKTLLLTLVVMTIVCLDLGYTLT. 4 disulfides stabilise this stretch: Cys-24–Cys-41, Cys-34–Cys-59, Cys-63–Cys-71, and Cys-72–Cys-77.

This sequence belongs to the three-finger toxin family. Short-chain subfamily. Expressed by the venom gland.

It localises to the secreted. The chain is Short neurotoxin 3 from Oxyuranus scutellatus scutellatus (Australian taipan).